The following is a 128-amino-acid chain: Small ribosomal subunit protein uS12 (128 aa).

The interval 1–29 (MPTINQLIRKGREPKERKSKSPALMGNPQ) is disordered. D89 carries the post-translational modification 3-methylthioaspartic acid. The segment at 106–128 (GVEGRRQGRSKYGAKRPKEGGKK) is disordered.

It belongs to the universal ribosomal protein uS12 family. In terms of assembly, part of the 30S ribosomal subunit. Contacts proteins S8 and S17. May interact with IF1 in the 30S initiation complex.

Its function is as follows. With S4 and S5 plays an important role in translational accuracy. Functionally, interacts with and stabilizes bases of the 16S rRNA that are involved in tRNA selection in the A site and with the mRNA backbone. Located at the interface of the 30S and 50S subunits, it traverses the body of the 30S subunit contacting proteins on the other side and probably holding the rRNA structure together. The combined cluster of proteins S8, S12 and S17 appears to hold together the shoulder and platform of the 30S subunit. The sequence is that of Small ribosomal subunit protein uS12 from Dictyoglomus turgidum (strain DSM 6724 / Z-1310).